The sequence spans 60 residues: Large ribosomal subunit protein uL30 (60 aa).

This sequence belongs to the universal ribosomal protein uL30 family. Part of the 50S ribosomal subunit.

The chain is Large ribosomal subunit protein uL30 from Lachnoclostridium phytofermentans (strain ATCC 700394 / DSM 18823 / ISDg) (Clostridium phytofermentans).